The sequence spans 440 residues: Histidinol dehydrogenase (440 aa).

NAD(+) contacts are provided by Y136, Q197, and N220. 3 residues coordinate substrate: S243, Q265, and H268. Zn(2+) is bound by residues Q265 and H268. Residues E333 and H334 each act as proton acceptor in the active site. Residues H334, D367, E421, and H426 each coordinate substrate. A Zn(2+)-binding site is contributed by D367. H426 contacts Zn(2+).

Belongs to the histidinol dehydrogenase family. Zn(2+) serves as cofactor.

The catalysed reaction is L-histidinol + 2 NAD(+) + H2O = L-histidine + 2 NADH + 3 H(+). Its pathway is amino-acid biosynthesis; L-histidine biosynthesis; L-histidine from 5-phospho-alpha-D-ribose 1-diphosphate: step 9/9. Functionally, catalyzes the sequential NAD-dependent oxidations of L-histidinol to L-histidinaldehyde and then to L-histidine. The sequence is that of Histidinol dehydrogenase from Pseudomonas aeruginosa (strain ATCC 15692 / DSM 22644 / CIP 104116 / JCM 14847 / LMG 12228 / 1C / PRS 101 / PAO1).